A 275-amino-acid polypeptide reads, in one-letter code: 3-methyl-2-oxobutanoate hydroxymethyltransferase (275 aa).

Mg(2+) contacts are provided by D49 and D88. Residues 49-50 (DS), D88, and K118 each bind 3-methyl-2-oxobutanoate. E120 contributes to the Mg(2+) binding site. E187 functions as the Proton acceptor in the catalytic mechanism.

The protein belongs to the PanB family. In terms of assembly, homodecamer; pentamer of dimers. It depends on Mg(2+) as a cofactor.

The protein resides in the cytoplasm. The catalysed reaction is 3-methyl-2-oxobutanoate + (6R)-5,10-methylene-5,6,7,8-tetrahydrofolate + H2O = 2-dehydropantoate + (6S)-5,6,7,8-tetrahydrofolate. Its pathway is cofactor biosynthesis; (R)-pantothenate biosynthesis; (R)-pantoate from 3-methyl-2-oxobutanoate: step 1/2. Functionally, catalyzes the reversible reaction in which hydroxymethyl group from 5,10-methylenetetrahydrofolate is transferred onto alpha-ketoisovalerate to form ketopantoate. In Rhodospirillum centenum (strain ATCC 51521 / SW), this protein is 3-methyl-2-oxobutanoate hydroxymethyltransferase.